The sequence spans 619 residues: Pentatricopeptide repeat-containing protein At1g68980, mitochondrial (619 aa).

The N-terminal 100 residues, 1–100, are a transit peptide targeting the mitochondrion; the sequence is MLRKTLTLIS…RAFVSTTYVI (100 aa). PPR repeat units follow at residues 186 to 221, 222 to 256, 257 to 292, 295 to 329, 366 to 400, 401 to 435, 436 to 466, 472 to 506, 507 to 541, and 542 to 576; these read DLVA…GVKP, DELS…GFAS, RRIL…GEAS, SEET…ESMS, GIGV…GLQL, DVET…RVAD, LKRC…VMED, KSHD…QYEP, NNQT…KAKL, and EHAL…KIFV.

The protein belongs to the PPR family. P subfamily.

Its subcellular location is the mitochondrion. In Arabidopsis thaliana (Mouse-ear cress), this protein is Pentatricopeptide repeat-containing protein At1g68980, mitochondrial.